The chain runs to 445 residues: MVHQIHVIGGGLAGSEAAWQLAQAGIRVRLSEMRGIEATPAHQTDSLAELVCSNSFRSDDPTNAVGLLHAEMRALGSLIMAKADAHRVPAGSALAVDREGYAEAVTHAVAGHPLIELVRERVDALPADGPVIVATGPLTAAALADSIGAATGADALAFFDAIAPIVHHHSIDMDVAWMASRWDKGETKDYINCPMDKDQYLAFHQALLDGEKTAFKEWEKDTPYFDGCMPIEVMAERGVDTMRYGPMKPVGLDNPRTGRWPYAVVQLRQDNALGTLWNMVGFQTKLKHAEQVRLFRTIPGLGKAEFARLGGLHRNTFIQSPKLLDGALRLKSRPNIRFAGQITGCEGYVESAAIGLLAGRFAAAELLGRPIETPPAATALGALLGHITGGAEADGYQPMNVNFGLFPPLEGAKGGRKRKGDRKAMMAERAGEALKAWMDGGVEPA.

FAD is bound at residue 9 to 14; it reads GGGLAG.

Belongs to the MnmG family. TrmFO subfamily. It depends on FAD as a cofactor.

It localises to the cytoplasm. The catalysed reaction is uridine(54) in tRNA + (6R)-5,10-methylene-5,6,7,8-tetrahydrofolate + NADH + H(+) = 5-methyluridine(54) in tRNA + (6S)-5,6,7,8-tetrahydrofolate + NAD(+). It catalyses the reaction uridine(54) in tRNA + (6R)-5,10-methylene-5,6,7,8-tetrahydrofolate + NADPH + H(+) = 5-methyluridine(54) in tRNA + (6S)-5,6,7,8-tetrahydrofolate + NADP(+). Its function is as follows. Catalyzes the folate-dependent formation of 5-methyl-uridine at position 54 (M-5-U54) in all tRNAs. The polypeptide is Methylenetetrahydrofolate--tRNA-(uracil-5-)-methyltransferase TrmFO (Rhizorhabdus wittichii (strain DSM 6014 / CCUG 31198 / JCM 15750 / NBRC 105917 / EY 4224 / RW1) (Sphingomonas wittichii)).